A 67-amino-acid chain; its full sequence is Large ribosomal subunit protein uL29 (67 aa).

It belongs to the universal ribosomal protein uL29 family.

This chain is Large ribosomal subunit protein uL29, found in Ruminiclostridium cellulolyticum (strain ATCC 35319 / DSM 5812 / JCM 6584 / H10) (Clostridium cellulolyticum).